Consider the following 287-residue polypeptide: Nematocyst expressed protein 6 (287 aa).

The N-terminal stretch at 1 to 20 (MKGFIFAGVLVSALICLAEG) is a signal peptide. The 197-residue stretch at 53 to 249 (RAALRDRYLW…RQTNLMYKCN (197 aa)) folds into the Peptidase M12A domain. 2 cysteine pairs are disulfide-bonded: Cys95–Cys248 and Cys116–Cys139. His146 contributes to the Zn(2+) binding site. Residue Glu147 is part of the active site. Residues His150 and His156 each coordinate Zn(2+). Residues 249-287 (NAQGDSELQPVNDEDEDKDGGDSKKKPDPKGPKPGEIEE) are disordered. Residues 268–287 (GGDSKKKPDPKGPKPGEIEE) show a composition bias toward basic and acidic residues.

Zn(2+) is required as a cofactor. In terms of tissue distribution, nematocyte and pharyngeal gland.

Its subcellular location is the secreted. The protein localises to the nematocyst. In terms of biological role, metalloprotease. The chain is Nematocyst expressed protein 6 from Nematostella vectensis (Starlet sea anemone).